The chain runs to 278 residues: Alpha-tocopherol transfer protein (278 aa).

A CRAL-TRIO domain is found at 88–253 (RPRSILGLLK…EYGGKEFSME (166 aa)). Aspartate 185 is an a 1,2-diacyl-sn-glycero-3-phospho-(1D-myo-inositol-3,4-bisphosphate) binding site. Residue phenylalanine 187 coordinates (+)-alpha-tocopherol. 190-192 (KVR) is a binding site for a 1,2-diacyl-sn-glycero-3-phospho-(1D-myo-inositol-3,4-bisphosphate). 208–211 (SMIK) is a binding site for a 1,2-diacyl-sn-glycero-3-phospho-(1D-myo-inositol-4,5-bisphosphate). The a 1,2-diacyl-sn-glycero-3-phospho-(1D-myo-inositol-3,4-bisphosphate) site is built by lysine 217 and arginine 221.

Monomer and homotetramer. Phosphatidylinositol 4,5-bisphosphate binding induces the formation of homotetramers. Phosphatidylinositol 3,4-bisphosphate is less efficient in inducing tetramerization.

The protein resides in the cytoplasm. Its function is as follows. Binds (+)-alpha-tocopherol, enhances its transfer between separate membranes, and stimulates its release from liver cells. Binds both phosphatidylinositol 3,4-bisphosphate and phosphatidylinositol 4,5-bisphosphate; the resulting conformation change is important for the release of the bound alpha-tocopherol. The chain is Alpha-tocopherol transfer protein (Ttpa) from Mus musculus (Mouse).